The following is a 196-amino-acid chain: Adenylate kinase (196 aa).

Residue 9-17 participates in ATP binding; it reads GIPGVGKST.

The protein belongs to the archaeal adenylate kinase family.

It is found in the cytoplasm. It catalyses the reaction AMP + ATP = 2 ADP. This Pyrococcus furiosus (strain ATCC 43587 / DSM 3638 / JCM 8422 / Vc1) protein is Adenylate kinase.